The primary structure comprises 465 residues: Ribosomal oxygenase 2 (465 aa).

The 133-residue stretch at 139-271 (QPQRFKDELW…NSWGDFLLDT (133 aa)) folds into the JmjC domain. Positions 179, 181, and 240 each coordinate Fe cation. A Phosphoserine modification is found at Ser-309.

Belongs to the ROX family. MINA53 subfamily. It depends on Fe(2+) as a cofactor. In terms of tissue distribution, expressed in liver, skeletal muscle, heart, pancreas, and placenta. Not detected in brain, lung or kidney. Expressed in several lung cancer tissues, but is barely detected in the adjacent non-cancerous tissues. Also highly expressed in several esophageal squamous cell carcinoma (ESCC), and colon cancer tissues, and in various cancer cell lines.

It is found in the nucleus. The protein resides in the nucleolus. The enzyme catalyses L-histidyl-[protein] + 2-oxoglutarate + O2 = (3S)-3-hydroxy-L-histidyl-[protein] + succinate + CO2. It catalyses the reaction L-histidyl-[ribosomal protein uL15] + 2-oxoglutarate + O2 = (3S)-3-hydroxy-L-histidyl-[ribosomal protein uL15] + succinate + CO2. Functionally, oxygenase that can act as both a histone lysine demethylase and a ribosomal histidine hydroxylase. Is involved in the demethylation of trimethylated 'Lys-9' on histone H3 (H3K9me3), leading to an increase in ribosomal RNA expression. Also catalyzes the hydroxylation of 60S ribosomal protein L27a on 'His-39'. May play an important role in cell growth and survival. May be involved in ribosome biogenesis, most likely during the assembly process of pre-ribosomal particles. This Homo sapiens (Human) protein is Ribosomal oxygenase 2.